The chain runs to 172 residues: Myosin regulatory light polypeptide 9 (172 aa).

Residues 1–16 (MSSKRAKAKTTKKRPQ) are compositionally biased toward basic residues. The segment at 1 to 20 (MSSKRAKAKTTKKRPQRATS) is disordered. At S2 the chain carries N-acetylserine. T19 is subject to Phosphothreonine; by MLCK, CIT and ROCK2. Position 20 is a phosphoserine; by CDC42BP, CIT, MLCK, PAK1, ROCK1, ROCK2, DAPK1, DAPK2 and ZIPK/DAPK3 (S20). 3 EF-hand domains span residues 29-64 (SQIQ…LGKN), 98-133 (DPED…MGDR), and 134-169 (FTDE…GAKD). Residues D42, N44, D46, and D53 each coordinate Ca(2+).

As to quaternary structure, myosin is a hexamer of 2 heavy chains and 4 light chains: interacts with myosin heavy chain MYO19. Interacts with LUZP1; the interaction results in inhibition of phosphorylation of MYL9 by DAPK3. Post-translationally, phosphorylation increases the actin-activated myosin ATPase activity and thereby regulates the contractile activity. It is required to generate the driving force in the migration of the cells but not necessary for localization of myosin-2 at the leading edge. Phosphorylation is required for myotube formation. Phosphorylated by DAPK3; DAPK3-mediated phosphorylation is inhibited by LUZP1. In terms of tissue distribution, smooth muscle tissues and in some, but not all, nonmuscle cells.

The protein resides in the cytoplasm. The protein localises to the cytoskeleton. It localises to the cell cortex. Its function is as follows. Myosin regulatory subunit that plays an important role in regulation of both smooth muscle and nonmuscle cell contractile activity via its phosphorylation. Implicated in cytokinesis, receptor capping, and cell locomotion. In myoblasts, may regulate PIEZO1-dependent cortical actomyosin assembly involved in myotube formation. The polypeptide is Myosin regulatory light polypeptide 9 (MYL9) (Homo sapiens (Human)).